Here is a 519-residue protein sequence, read N- to C-terminus: Matrix metalloproteinase-B (519 aa).

The signal sequence occupies residues 1–26 (MTKWSPNGNPLSTIYLILSLFTLAHT). Residues 27 to 126 (APTTQHSRTT…RQEQTKRTKR (100 aa)) constitute a propeptide, activation peptide. Over residues 29–39 (TTQHSRTTTQL) the composition is skewed to polar residues. Residues 29–50 (TTQHSRTTTQLRLEDEDGGGGV) form a disordered region. Residues 109 to 116 (PRCTQTDV) carry the Cysteine switch motif. Zn(2+) contacts are provided by Cys-111, His-208, Asp-210, His-232, His-247, and His-276. The active site involves Glu-277. Residues His-280 and His-286 each coordinate Zn(2+). A glycan (N-linked (GlcNAc...) asparagine) is linked at Asn-341. The segment covering 391 to 402 (KDKRSYRGDSKI) has biased composition (basic and acidic residues). A disordered region spans residues 391-410 (KDKRSYRGDSKIPKCSSNNS). Asn-408 carries N-linked (GlcNAc...) asparagine glycosylation.

This sequence belongs to the peptidase M10A family. Zn(2+) serves as cofactor. In terms of tissue distribution, expressed in spermatheca and spermathecal-uterine valve, weakly in vulva and anal muscles and in two cells in the head (probably RMEV and RMED motor neurons).

The protein resides in the secreted. The protein localises to the extracellular space. It localises to the extracellular matrix. With respect to regulation, inhibited by human TIMP1 and TIMP2 and the broad MMP inhibitors BB94 (Batimastat) and CT543. Metalloprotease involved in molting, a process during larval stages in which a new cuticle is formed and the old cuticle is shed. Plays a role in thermotolerance probably by preventing the accumulation of oxidized lipoproteins and cholesterol. In Caenorhabditis elegans, this protein is Matrix metalloproteinase-B.